The sequence spans 945 residues: Kinesin-like protein KIN-UA (945 aa).

The tract at residues 1-54 (MAANGRASVRPVERHGAPPRPAGRSRSVAPPSRRPSPSPSRARPAAADNDGGSD) is disordered. The segment covering 22-31 (AGRSRSVAPP) has biased composition (low complexity). Positions 57–399 (RVRVAVRLRP…IMFGQRAMKI (343 aa)) constitute a Kinesin motor domain. 142-149 (GQTGTGKT) is an ATP binding site. Positions 369 to 377 (RTSLIVTIG) match the D-BOX motif. A coiled-coil region spans residues 415-644 (YKKVEHEVDH…ILRLKQSLAD (230 aa)). 4 ARM repeats span residues 683–722 (RSNI…NLAA), 724–764 (DVNQ…NLAM), 766–806 (GSNQ…NLCG), and 808–847 (EKLH…NFAK).

Belongs to the TRAFAC class myosin-kinesin ATPase superfamily. Kinesin family. Ungrouped subfamily.

Its subcellular location is the cytoplasm. The protein resides in the cytoskeleton. In Oryza sativa subsp. japonica (Rice), this protein is Kinesin-like protein KIN-UA.